Reading from the N-terminus, the 426-residue chain is Adenylosuccinate synthetase 2 (426 aa).

GTP contacts are provided by residues 12 to 18 (GDEGKGK) and 40 to 42 (GHT). Asp-13 acts as the Proton acceptor in catalysis. 2 residues coordinate Mg(2+): Asp-13 and Gly-40. IMP is bound by residues 13–16 (DEGK), 38–41 (NAGH), Arg-147, Asn-223, Thr-238, and Arg-302. His-41 functions as the Proton donor in the catalytic mechanism. 298–304 (TNTGRRR) serves as a coordination point for substrate. GTP-binding positions include Arg-304, 330–332 (KLD), and 412–414 (GVG).

This sequence belongs to the adenylosuccinate synthetase family. Homodimer. Mg(2+) serves as cofactor.

The protein localises to the cytoplasm. It catalyses the reaction IMP + L-aspartate + GTP = N(6)-(1,2-dicarboxyethyl)-AMP + GDP + phosphate + 2 H(+). The protein operates within purine metabolism; AMP biosynthesis via de novo pathway; AMP from IMP: step 1/2. Functionally, plays an important role in the de novo pathway and in the salvage pathway of purine nucleotide biosynthesis. Catalyzes the first committed step in the biosynthesis of AMP from IMP. In Laccaria bicolor (strain S238N-H82 / ATCC MYA-4686) (Bicoloured deceiver), this protein is Adenylosuccinate synthetase 2.